The following is a 533-amino-acid chain: MGCLFSKERRSGGSDMGVSERIDVSRFQTPQQQTVFHVNNGGNEGTISQLNGTSDGMMGNGRGGGGGGGAQERETLVALYPYDSRADGDLSFQKGDAMYLLDHSNCDWWYVRHQRTGQTGYVPRNFVAKQQTIESEEWYAGKIPRNRAERLVLSSHLPKGTFLIREREADTREFALTIRDTDDQRNGGTVKHYKIKRLDHDQGYFITTRRTFRSLQELVRYYSDVPDGLCCQLTFPAPRLAPTRPDLSHDTQQNWEIPRNQLHLKRKLGDGNFGEVWYGKWRGIVEVAIKTMKPGTMSPEAFLQEAQIMKQCDHPNLVKLYAVCTREEPFYIITEYMINGSLLQYLRTDGSTLGIQALVDMAAQIANGMMYLEERKLVHRDLAARNVLVGDKISGVPVVKVADFGLARKLMEEDIYEARTGAKFPIKWTAPEAATCGNFTVKSDVWSYGILLYEIMTKGQVPYPGMHNREVVEQVELGYRMPMPRGCPEQIYEEVLLKCWDKTPDRRPTFDTLYHFFDDYFVSTQPNYAPPSA.

Residue Gly-2 is the site of N-myristoyl glycine attachment. Residues Gln-71–Thr-132 form the SH3 domain. The SH2 domain occupies Trp-138–Ala-237. The Protein kinase domain maps to Leu-262 to Phe-521. Residues Leu-268–Val-276 and Lys-290 each bind ATP. Residue Asp-381 is the Proton acceptor of the active site. A Phosphotyrosine; by autocatalysis modification is found at Tyr-416. Tyr-528 carries the phosphotyrosine modification.

The protein belongs to the protein kinase superfamily. Tyr protein kinase family. SRC subfamily. Interacts (via SH2 domain and SH3 domain) with unc-5 (via cytoplasmic domain); the interaction requires kinase activity. Interacts (when activated and phosphorylated at 'Tyr-416') with ina-1 (via cytoplasmic domain) and with ced-2 (via SH2 domain). It depends on Mg(2+) as a cofactor. Mn(2+) serves as cofactor. In terms of processing, may be phosphorylated on Tyr-528 by csk-1. As to expression, expressed in some neurons (ASE, ADF, AVA, AUA, RMDV and BAG) in the head region, anchor cell, vulva, cells around anus, body wall muscle, pharyngeal muscles in procorpus and metacorpus. Expressed in gonadal distal tip cells.

The protein localises to the cell membrane. The protein resides in the cell projection. Its subcellular location is the phagocytic cup. The enzyme catalyses L-tyrosyl-[protein] + ATP = O-phospho-L-tyrosyl-[protein] + ADP + H(+). May be activated by autophosphorylation. May be inhibited by csk-1-mediated phosphorylation. In terms of biological role, non-receptor tyrosine-protein kinase which plays a role in endoderm development by controlling spindle orientation in EMS blastomere, probably downstream of receptor mes-1. Also involved in embryonic body morphogenesis, especially in the formation of the pharynx and the intestine. May be dispensable for pharyngeal muscle organization in the adult. Probably phosphorylates netrin receptor unc-5, to regulate distal tip cell (DTC) migration during gonad development and in axon repulsion. Plays a role in the migration of the QR neuroblast, a precursor of the AVM neuron, and in the migration of the axon cone of AVM, ALM, CAN and PVM neurons. May act downstream of migratory protein mig-13 to control AVM neuron migration. Probably downstream of integrin ina-1/pat-3, plays a role in the clearance of apoptotic cells during mid-embryogenesis. Phosphorylates ced-1 at 'Tyr-1019' which promotes ced-1 proteasomal degradation, maintaining appropriate ced-1 levels for apoptotic cell clearance. This is Tyrosine protein-kinase src-1 from Caenorhabditis elegans.